Here is a 717-residue protein sequence, read N- to C-terminus: Methionine--tRNA ligase (717 aa).

Residues 19–29 (PYANGDLHVGH) carry the 'HIGH' region motif. Residues Cys-150, Cys-153, Cys-162, and Cys-166 each coordinate Zn(2+). The 'KMSKS' region signature appears at 356 to 360 (ALSTS). Thr-359 contacts ATP. Residues 573 to 603 (ERVEEASEASAEASNEGGEAAGDEVDDGDVD) are disordered. The span at 580 to 590 (EASAEASNEGG) shows a compositional bias: low complexity. Residues 593–603 (AGDEVDDGDVD) are compositionally biased toward acidic residues. The 99-residue stretch at 619 to 717 (DFEGVDMRVG…EDAPLGTRIK (99 aa)) folds into the tRNA-binding domain.

Belongs to the class-I aminoacyl-tRNA synthetase family. MetG type 1 subfamily. Homodimer. Requires Zn(2+) as cofactor.

It localises to the cytoplasm. It carries out the reaction tRNA(Met) + L-methionine + ATP = L-methionyl-tRNA(Met) + AMP + diphosphate. Is required not only for elongation of protein synthesis but also for the initiation of all mRNA translation through initiator tRNA(fMet) aminoacylation. The protein is Methionine--tRNA ligase of Haloarcula marismortui (strain ATCC 43049 / DSM 3752 / JCM 8966 / VKM B-1809) (Halobacterium marismortui).